A 365-amino-acid polypeptide reads, in one-letter code: Mitogen-activated protein kinase 13 (365 aa).

The Protein kinase domain maps to 25-308 (YVSPTHVGSG…AAQALTHPFF (284 aa)). 31–39 (VGSGAYGSV) contributes to the ATP binding site. A Phosphoserine modification is found at Ser47. Position 54 (Lys54) interacts with ATP. The Proton acceptor role is filled by Asp150. The residue at position 180 (Thr180) is a Phosphothreonine; by MAP2K3, MAP2K4, MAP2K6 and MAP2K7. A TXY motif is present at residues 180–182 (TGY). Residue Tyr182 is modified to Phosphotyrosine; by MAP2K3, MAP2K4, MAP2K6 and MAP2K7. Ser350 bears the Phosphoserine mark.

Belongs to the protein kinase superfamily. CMGC Ser/Thr protein kinase family. MAP kinase subfamily. As to quaternary structure, interacts with MAPK8IP2. Mg(2+) serves as cofactor. In terms of processing, dually phosphorylated on Thr-180 and Tyr-182 by MAP2K3/MKK3, MAP2K4/MKK4, MAP2K6/MKK6 and MAP2K7/MKK7, which activates the enzyme. Dephosphorylated by dual specificity phosphatase DUSP1.

The catalysed reaction is L-seryl-[protein] + ATP = O-phospho-L-seryl-[protein] + ADP + H(+). The enzyme catalyses L-threonyl-[protein] + ATP = O-phospho-L-threonyl-[protein] + ADP + H(+). Its activity is regulated as follows. Activated by phosphorylation on threonine and tyrosine by dual specificity kinases, MAP2K3/MKK3, MAP2K6/MKK6, MAP2K4/MKK4 and MAP2K7/MKK7. Activation by ultraviolet radiation, hyperosmotic shock, anisomycin or by TNF-alpha is mediated by MAP2K3/MKK3. Inhibited by dual specificity phosphatase DUSP1. Serine/threonine kinase which acts as an essential component of the MAP kinase signal transduction pathway. MAPK13 is one of the four p38 MAPKs which play an important role in the cascades of cellular responses evoked by extracellular stimuli such as pro-inflammatory cytokines or physical stress leading to direct activation of transcription factors such as ELK1 and ATF2. Accordingly, p38 MAPKs phosphorylate a broad range of proteins and it has been estimated that they may have approximately 200 to 300 substrates each. MAPK13 is one of the less studied p38 MAPK isoforms. Some of the targets are downstream kinases such as MAPKAPK2, which are activated through phosphorylation and further phosphorylate additional targets. Plays a role in the regulation of protein translation by phosphorylating and inactivating EEF2K. Involved in cytoskeletal remodeling through phosphorylation of MAPT and STMN1. Mediates UV irradiation induced up-regulation of the gene expression of CXCL14. Plays an important role in the regulation of epidermal keratinocyte differentiation, apoptosis and skin tumor development. Phosphorylates the transcriptional activator MYB in response to stress which leads to rapid MYB degradation via a proteasome-dependent pathway. MAPK13 also phosphorylates and down-regulates PRKD1 during regulation of insulin secretion in pancreatic beta cells. The polypeptide is Mitogen-activated protein kinase 13 (MAPK13) (Pan troglodytes (Chimpanzee)).